The sequence spans 344 residues: Holliday junction branch migration complex subunit RuvB (344 aa).

The tract at residues 1-181 is large ATPase domain (RuvB-L); it reads MERIVTPAEM…FGVLCAMEYY (181 aa). Residues Leu20, Arg21, Gly62, Lys65, Thr66, Thr67, 128–130, Arg171, Tyr181, and Arg218 contribute to the ATP site; that span reads EDY. Thr66 lines the Mg(2+) pocket. Positions 182-252 are small ATPAse domain (RuvB-S); sequence DETQLKEIVI…EARDALELLE (71 aa). Residues 255–344 are head domain (RuvB-H); sequence NQGFDKVDNK…SNKGQTSFFK (90 aa). DNA-binding residues include Arg310 and Arg315.

Belongs to the RuvB family. As to quaternary structure, homohexamer. Forms an RuvA(8)-RuvB(12)-Holliday junction (HJ) complex. HJ DNA is sandwiched between 2 RuvA tetramers; dsDNA enters through RuvA and exits via RuvB. An RuvB hexamer assembles on each DNA strand where it exits the tetramer. Each RuvB hexamer is contacted by two RuvA subunits (via domain III) on 2 adjacent RuvB subunits; this complex drives branch migration. In the full resolvosome a probable DNA-RuvA(4)-RuvB(12)-RuvC(2) complex forms which resolves the HJ.

The protein localises to the cytoplasm. The enzyme catalyses ATP + H2O = ADP + phosphate + H(+). Its function is as follows. The RuvA-RuvB-RuvC complex processes Holliday junction (HJ) DNA during genetic recombination and DNA repair, while the RuvA-RuvB complex plays an important role in the rescue of blocked DNA replication forks via replication fork reversal (RFR). RuvA specifically binds to HJ cruciform DNA, conferring on it an open structure. The RuvB hexamer acts as an ATP-dependent pump, pulling dsDNA into and through the RuvAB complex. RuvB forms 2 homohexamers on either side of HJ DNA bound by 1 or 2 RuvA tetramers; 4 subunits per hexamer contact DNA at a time. Coordinated motions by a converter formed by DNA-disengaged RuvB subunits stimulates ATP hydrolysis and nucleotide exchange. Immobilization of the converter enables RuvB to convert the ATP-contained energy into a lever motion, pulling 2 nucleotides of DNA out of the RuvA tetramer per ATP hydrolyzed, thus driving DNA branch migration. The RuvB motors rotate together with the DNA substrate, which together with the progressing nucleotide cycle form the mechanistic basis for DNA recombination by continuous HJ branch migration. Branch migration allows RuvC to scan DNA until it finds its consensus sequence, where it cleaves and resolves cruciform DNA. In Clostridium botulinum (strain Eklund 17B / Type B), this protein is Holliday junction branch migration complex subunit RuvB.